The following is a 94-amino-acid chain: MICOS complex subunit MIC12 (94 aa).

Residues Tyr-7–Tyr-23 form a helical membrane-spanning segment.

The protein belongs to the MICOS complex subunit Mic12 family. In terms of assembly, component of the mitochondrial contact site and cristae organizing system (MICOS) complex.

It localises to the mitochondrion inner membrane. Its function is as follows. Component of the MICOS complex, a large protein complex of the mitochondrial inner membrane that plays crucial roles in the maintenance of crista junctions, inner membrane architecture, and formation of contact sites to the outer membrane. The sequence is that of MICOS complex subunit MIC12 (AIM5) from Eremothecium gossypii (strain ATCC 10895 / CBS 109.51 / FGSC 9923 / NRRL Y-1056) (Yeast).